The primary structure comprises 95 residues: MSFKPLHDRIAIKPIEHEEKTKGGIIIPDTAKEKPMQGEIVAVGNGIRNKKGEIHPLELKIGDKVLYGKWAGTEIEIKGEKLIVMKETDVFGIIN.

This sequence belongs to the GroES chaperonin family. As to quaternary structure, heptamer of 7 subunits arranged in a ring. Interacts with the chaperonin GroEL.

Its subcellular location is the cytoplasm. Together with the chaperonin GroEL, plays an essential role in assisting protein folding. The GroEL-GroES system forms a nano-cage that allows encapsulation of the non-native substrate proteins and provides a physical environment optimized to promote and accelerate protein folding. GroES binds to the apical surface of the GroEL ring, thereby capping the opening of the GroEL channel. The polypeptide is Co-chaperonin GroES (Rickettsia felis (strain ATCC VR-1525 / URRWXCal2) (Rickettsia azadi)).